Here is a 153-residue protein sequence, read N- to C-terminus: Ribonuclease K6 (153 aa).

Residues 1-27 (MVVDLPRYLPLLLLLELWEPMYLLCSQ) form the signal peptide. Catalysis depends on His-41, which acts as the Proton acceptor. Cystine bridges form between Cys-49–Cys-107, Cys-63–Cys-117, Cys-81–Cys-132, and Cys-88–Cys-95. The N-linked (GlcNAc...) asparagine glycan is linked to Asn-58. 64–68 (KQINT) is a substrate binding site. The N-linked (GlcNAc...) asparagine glycan is linked to Asn-85. Lys-89 provides a ligand contact to substrate. Catalysis depends on His-148, which acts as the Proton donor.

This sequence belongs to the pancreatic ribonuclease family. In terms of assembly, interacts (via N-terminus) with bacterial lipopolysaccharide (LPS). In terms of tissue distribution, highly expressed in spleen (at protein level). Has little or no expression in healthy kidneys (at protein level). Detected at high levels in infected kidneys (at protein level). Expressed at low levels in bladder. Also detected in skeletal muscle, heart and bone marrow.

The protein resides in the secreted. Its subcellular location is the lysosome. It localises to the cytoplasmic granule. Ribonuclease which shows a preference for the pyrimidines uridine and cytosine. Has potent antibacterial activity against a range of Gram-positive and Gram-negative bacteria, including P.aeruginosa, A.baumanii, M.luteus, S.aureus, E.faecalis, E.faecium, S.saprophyticus and E.coli. Causes loss of bacterial membrane integrity, and also promotes agglutination of Gram-negative bacteria. Probably contributes to urinary tract sterility. Bactericidal activity is independent of RNase activity. This chain is Ribonuclease K6 (Rnase6), found in Mus musculus (Mouse).